The sequence spans 432 residues: Adenylosuccinate synthetase (432 aa).

GTP contacts are provided by residues 13–19 (GDEGKGK) and 41–43 (GHT). Residue aspartate 14 is the Proton acceptor of the active site. The Mg(2+) site is built by aspartate 14 and glycine 41. IMP is bound by residues 14–17 (DEGK), 39–42 (NAGH), threonine 130, arginine 144, glutamine 225, threonine 240, and arginine 304. Histidine 42 (proton donor) is an active-site residue. Residue 300–306 (ATTGRRR) participates in substrate binding. Residues arginine 306, 332-334 (KLD), and 415-417 (STG) each bind GTP.

It belongs to the adenylosuccinate synthetase family. As to quaternary structure, homodimer. The cofactor is Mg(2+).

The protein localises to the cytoplasm. It catalyses the reaction IMP + L-aspartate + GTP = N(6)-(1,2-dicarboxyethyl)-AMP + GDP + phosphate + 2 H(+). It functions in the pathway purine metabolism; AMP biosynthesis via de novo pathway; AMP from IMP: step 1/2. Functionally, plays an important role in the de novo pathway of purine nucleotide biosynthesis. Catalyzes the first committed step in the biosynthesis of AMP from IMP. The polypeptide is Adenylosuccinate synthetase (Baumannia cicadellinicola subsp. Homalodisca coagulata).